We begin with the raw amino-acid sequence, 232 residues long: Ribonuclease 3 (232 aa).

One can recognise an RNase III domain in the interval 6-133; that stretch reads LKEIEENLGV…IIAAVYLDKG (128 aa). E46 is a binding site for Mg(2+). D50 is an active-site residue. Mg(2+)-binding residues include D119 and E122. The active site involves E122. Residues 160–229 form the DRBM domain; that stretch reads DFKTKLQELL…AKQALDILEG (70 aa).

Belongs to the ribonuclease III family. Homodimer. It depends on Mg(2+) as a cofactor.

Its subcellular location is the cytoplasm. It catalyses the reaction Endonucleolytic cleavage to 5'-phosphomonoester.. Its function is as follows. Digests double-stranded RNA. Involved in the processing of primary rRNA transcript to yield the immediate precursors to the large and small rRNAs (23S and 16S). Processes some mRNAs, and tRNAs when they are encoded in the rRNA operon. Processes pre-crRNA and tracrRNA of type II CRISPR loci if present in the organism. This Clostridium beijerinckii (strain ATCC 51743 / NCIMB 8052) (Clostridium acetobutylicum) protein is Ribonuclease 3.